A 251-amino-acid polypeptide reads, in one-letter code: Ubiquinone/menaquinone biosynthesis C-methyltransferase UbiE (251 aa).

Residues threonine 74, aspartate 95, 123 to 124 (NA), and serine 140 each bind S-adenosyl-L-methionine.

It belongs to the class I-like SAM-binding methyltransferase superfamily. MenG/UbiE family.

It catalyses the reaction a 2-demethylmenaquinol + S-adenosyl-L-methionine = a menaquinol + S-adenosyl-L-homocysteine + H(+). The enzyme catalyses a 2-methoxy-6-(all-trans-polyprenyl)benzene-1,4-diol + S-adenosyl-L-methionine = a 5-methoxy-2-methyl-3-(all-trans-polyprenyl)benzene-1,4-diol + S-adenosyl-L-homocysteine + H(+). It functions in the pathway quinol/quinone metabolism; menaquinone biosynthesis; menaquinol from 1,4-dihydroxy-2-naphthoate: step 2/2. It participates in cofactor biosynthesis; ubiquinone biosynthesis. In terms of biological role, methyltransferase required for the conversion of demethylmenaquinol (DMKH2) to menaquinol (MKH2) and the conversion of 2-polyprenyl-6-methoxy-1,4-benzoquinol (DDMQH2) to 2-polyprenyl-3-methyl-6-methoxy-1,4-benzoquinol (DMQH2). In Photorhabdus laumondii subsp. laumondii (strain DSM 15139 / CIP 105565 / TT01) (Photorhabdus luminescens subsp. laumondii), this protein is Ubiquinone/menaquinone biosynthesis C-methyltransferase UbiE.